A 58-amino-acid chain; its full sequence is MLFWVLIFFIIAVIAALFGFTGIAAASAGIAKILFFIFLVLFVISLIAMLVRGRRPKL.

A run of 2 helical transmembrane segments spans residues 3–23 (FWVL…FTGI) and 30–50 (IAKI…IAML).

The protein belongs to the UPF0391 family.

The protein localises to the cell membrane. The sequence is that of UPF0391 membrane protein COXBURSA331_A2131 from Coxiella burnetii (strain RSA 331 / Henzerling II).